The sequence spans 336 residues: Ferredoxin--NADP reductase (336 aa).

The FAD site is built by T18, E37, Q45, Y50, V92, F127, D290, and S331.

The protein belongs to the ferredoxin--NADP reductase type 2 family. Homodimer. FAD serves as cofactor.

The enzyme catalyses 2 reduced [2Fe-2S]-[ferredoxin] + NADP(+) + H(+) = 2 oxidized [2Fe-2S]-[ferredoxin] + NADPH. This Symbiobacterium thermophilum (strain DSM 24528 / JCM 14929 / IAM 14863 / T) protein is Ferredoxin--NADP reductase.